Reading from the N-terminus, the 123-residue chain is Small ribosomal subunit protein uS12 (123 aa).

Aspartate 89 carries the post-translational modification 3-methylthioaspartic acid.

Belongs to the universal ribosomal protein uS12 family. In terms of assembly, part of the 30S ribosomal subunit. Contacts proteins S8 and S17. May interact with IF1 in the 30S initiation complex.

In terms of biological role, with S4 and S5 plays an important role in translational accuracy. Interacts with and stabilizes bases of the 16S rRNA that are involved in tRNA selection in the A site and with the mRNA backbone. Located at the interface of the 30S and 50S subunits, it traverses the body of the 30S subunit contacting proteins on the other side and probably holding the rRNA structure together. The combined cluster of proteins S8, S12 and S17 appears to hold together the shoulder and platform of the 30S subunit. In Syntrophobacter fumaroxidans (strain DSM 10017 / MPOB), this protein is Small ribosomal subunit protein uS12.